The chain runs to 227 residues: MAEKQTLIDAINDRFNSQIEAVVAGVDMVTIELLPTHLLEVCTTLRDDPPFNFELLLDVCGVDYLEYGMSPWRTEETPNTGFSRGFEEVIQEQIIPWNKPRFAVVYHLLSLRHNHRIRLKTYVEGDPPLVPSVIKIWSSADWYEREAFDLYGIVFEGHPDLRRLLTDYGFVGHPFRKDFPLIGEVELRYDAAQQRCVYEPVSIQPRVLVPKVIRVDSRYEKGEKENG.

This sequence belongs to the complex I 30 kDa subunit family. In terms of assembly, NDH-1 is composed of 14 different subunits. Subunits NuoB, C, D, E, F, and G constitute the peripheral sector of the complex.

The protein resides in the cell inner membrane. It carries out the reaction a quinone + NADH + 5 H(+)(in) = a quinol + NAD(+) + 4 H(+)(out). Its function is as follows. NDH-1 shuttles electrons from NADH, via FMN and iron-sulfur (Fe-S) centers, to quinones in the respiratory chain. The immediate electron acceptor for the enzyme in this species is believed to be ubiquinone. Couples the redox reaction to proton translocation (for every two electrons transferred, four hydrogen ions are translocated across the cytoplasmic membrane), and thus conserves the redox energy in a proton gradient. The chain is NADH-quinone oxidoreductase subunit C from Coxiella burnetii (strain RSA 331 / Henzerling II).